The following is a 179-amino-acid chain: ADP-ribosylation factor-like protein 5B (179 aa).

The N-myristoyl glycine moiety is linked to residue G2. Residues 23–30, 66–70, 125–128, and A159 contribute to the GTP site; these read GLDNAGKT, DIGGQ, and NKQD.

It belongs to the small GTPase superfamily. Arf family.

Binds and exchanges GTP and GDP. This is ADP-ribosylation factor-like protein 5B (Arl5b) from Mus musculus (Mouse).